Here is a 143-residue protein sequence, read N- to C-terminus: Putative pre-16S rRNA nuclease (143 aa).

It belongs to the YqgF nuclease family.

It localises to the cytoplasm. Functionally, could be a nuclease involved in processing of the 5'-end of pre-16S rRNA. The protein is Putative pre-16S rRNA nuclease of Mesomycoplasma hyopneumoniae (strain 232) (Mycoplasma hyopneumoniae).